A 207-amino-acid polypeptide reads, in one-letter code: Ciliary microtubule-associated protein 3 (207 aa).

As to quaternary structure, interacts with proteins involved in ciliary transport, including ARL13B, CETN1, KIF3A, RAB6A, RAB8A, TUBB1 and TUBG1. Interacts with AURKA. In terms of tissue distribution, expressed in tissues rich in ciliated cells, such as lung, kidney, vas deferens and testis. Both isoforms 1 and 2 are expressed in testis.

It localises to the golgi apparatus. The protein resides in the golgi stack. Its subcellular location is the trans-Golgi network. It is found in the nucleus. The protein localises to the cytoplasm. It localises to the cytoplasmic vesicle. Functionally, during primary cilia disassembly, involved in cilia disassembly. Required specifically to control cilia retraction as well as the liberation and duplication of the basal body/centrosome. May act by stimulating AURKA activity at the basal body in a cell cycle-dependent manner. This chain is Ciliary microtubule-associated protein 3 (Cimap3), found in Mus musculus (Mouse).